Reading from the N-terminus, the 198-residue chain is LIM domain-containing protein D (198 aa).

Positions 5–65 (GKCTRCQKTV…ANHYPVGGLS (61 aa)) constitute an LIM zinc-binding domain.

Its subcellular location is the cell projection. The protein localises to the pseudopodium. It is found in the cytoplasm. It localises to the cell cortex. The protein resides in the cytoskeleton. Functionally, binds to F-actin and may modulate the chemotactic response during early development and contribute to the maintenance of the strength of the actin cytoskeleton. In Dictyostelium discoideum (Social amoeba), this protein is LIM domain-containing protein D (limD).